Here is a 299-residue protein sequence, read N- to C-terminus: ATP phosphoribosyltransferase (299 aa).

This sequence belongs to the ATP phosphoribosyltransferase family. Long subfamily. Equilibrium between an active dimeric form, an inactive hexameric form and higher aggregates. Interconversion between the various forms is largely reversible and is influenced by the natural substrates and inhibitors of the enzyme. The cofactor is Mg(2+).

It is found in the cytoplasm. The enzyme catalyses 1-(5-phospho-beta-D-ribosyl)-ATP + diphosphate = 5-phospho-alpha-D-ribose 1-diphosphate + ATP. Its pathway is amino-acid biosynthesis; L-histidine biosynthesis; L-histidine from 5-phospho-alpha-D-ribose 1-diphosphate: step 1/9. Feedback inhibited by histidine. Catalyzes the condensation of ATP and 5-phosphoribose 1-diphosphate to form N'-(5'-phosphoribosyl)-ATP (PR-ATP). Has a crucial role in the pathway because the rate of histidine biosynthesis seems to be controlled primarily by regulation of HisG enzymatic activity. This is ATP phosphoribosyltransferase from Pectobacterium atrosepticum (strain SCRI 1043 / ATCC BAA-672) (Erwinia carotovora subsp. atroseptica).